Reading from the N-terminus, the 279-residue chain is Methylthioribulose-1-phosphate dehydratase (279 aa).

Residue Cys-132 participates in substrate binding. The Zn(2+) site is built by His-150 and His-152. Glu-175 (proton donor/acceptor) is an active-site residue. Position 240 (His-240) interacts with Zn(2+).

The protein belongs to the aldolase class II family. MtnB subfamily. It depends on Zn(2+) as a cofactor.

The protein localises to the cytoplasm. The catalysed reaction is 5-(methylsulfanyl)-D-ribulose 1-phosphate = 5-methylsulfanyl-2,3-dioxopentyl phosphate + H2O. It functions in the pathway amino-acid biosynthesis; L-methionine biosynthesis via salvage pathway; L-methionine from S-methyl-5-thio-alpha-D-ribose 1-phosphate: step 2/6. In terms of biological role, catalyzes the dehydration of methylthioribulose-1-phosphate (MTRu-1-P) into 2,3-diketo-5-methylthiopentyl-1-phosphate (DK-MTP-1-P). The sequence is that of Methylthioribulose-1-phosphate dehydratase from Candida tropicalis (strain ATCC MYA-3404 / T1) (Yeast).